Reading from the N-terminus, the 560-residue chain is 2-succinyl-5-enolpyruvyl-6-hydroxy-3-cyclohexene-1-carboxylate synthase (560 aa).

It belongs to the TPP enzyme family. MenD subfamily. As to quaternary structure, homodimer. The cofactor is Mg(2+). Requires Mn(2+) as cofactor. Thiamine diphosphate serves as cofactor.

The catalysed reaction is isochorismate + 2-oxoglutarate + H(+) = 5-enolpyruvoyl-6-hydroxy-2-succinyl-cyclohex-3-ene-1-carboxylate + CO2. It functions in the pathway quinol/quinone metabolism; 1,4-dihydroxy-2-naphthoate biosynthesis; 1,4-dihydroxy-2-naphthoate from chorismate: step 2/7. The protein operates within quinol/quinone metabolism; menaquinone biosynthesis. Its function is as follows. Catalyzes the thiamine diphosphate-dependent decarboxylation of 2-oxoglutarate and the subsequent addition of the resulting succinic semialdehyde-thiamine pyrophosphate anion to isochorismate to yield 2-succinyl-5-enolpyruvyl-6-hydroxy-3-cyclohexene-1-carboxylate (SEPHCHC). This Staphylococcus saprophyticus subsp. saprophyticus (strain ATCC 15305 / DSM 20229 / NCIMB 8711 / NCTC 7292 / S-41) protein is 2-succinyl-5-enolpyruvyl-6-hydroxy-3-cyclohexene-1-carboxylate synthase.